A 65-amino-acid polypeptide reads, in one-letter code: Large ribosomal subunit protein bL35 (65 aa).

The disordered stretch occupies residues 1–22; it reads MPKIKTVRGAAKRFKKTGKGGF. Residues 10-22 are compositionally biased toward basic residues; sequence AAKRFKKTGKGGF.

This sequence belongs to the bacterial ribosomal protein bL35 family.

This Escherichia coli O127:H6 (strain E2348/69 / EPEC) protein is Large ribosomal subunit protein bL35.